We begin with the raw amino-acid sequence, 151 residues long: MLLLLLLLLLGPGSCLSEATRRSHVYKRGLLELAGTLDCVGPRSPMAYMNYGCYCGLGGHGEPRDAIDWCCYYHDCCYSQAQDAGCSPKLYRYPWKCMDHRILCGPAENKCQELLCRCDETLAYCLADTEYHLKYLFFPSVLCEKDSPKCN.

The N-terminal stretch at 1–17 is a signal peptide; that stretch reads MLLLLLLLLLGPGSCLS. Positions 18 to 28 are excised as a propeptide; the sequence is EATRRSHVYKR. 8 cysteine pairs are disulfide-bonded: C39/C97, C53/C143, C55/C71, C70/C125, C76/C150, C77/C118, C86/C111, and C104/C116. Y54, G56, and G58 together coordinate Ca(2+). Residue H74 is part of the active site. D75 serves as a coordination point for Ca(2+). D119 is an active-site residue.

The protein belongs to the phospholipase A2 family. In terms of assembly, interacts with PLA2R1; this interaction mediates PLA2G10 clearance and inactivation. Requires Ca(2+) as cofactor.

The protein localises to the secreted. Its subcellular location is the lysosome. It is found in the cytoplasmic vesicle. It localises to the secretory vesicle. The protein resides in the acrosome. It carries out the reaction a 1,2-diacyl-sn-glycero-3-phosphocholine + H2O = a 1-acyl-sn-glycero-3-phosphocholine + a fatty acid + H(+). It catalyses the reaction 1-hexadecanoyl-2-(9Z-octadecenoyl)-sn-glycero-3-phosphocholine + H2O = 1-hexadecanoyl-sn-glycero-3-phosphocholine + (9Z)-octadecenoate + H(+). The enzyme catalyses 1-octadecanoyl-2-(5Z,8Z,11Z,14Z-eicosatetraenoyl)-sn-glycero-3-phosphocholine + H2O = 1-octadecanoyl-sn-glycero-3-phosphocholine + (5Z,8Z,11Z,14Z)-eicosatetraenoate + H(+). The catalysed reaction is 1,2-dihexadecanoyl-sn-glycero-3-phosphocholine + H2O = 1-hexadecanoyl-sn-glycero-3-phosphocholine + hexadecanoate + H(+). It carries out the reaction 1-hexadecanoyl-2-(9Z-octadecenoyl)-sn-glycero-3-phosphoglycerol + H2O = 1-hexadecanoyl-sn-glycero-3-phosphoglycerol + (9Z)-octadecenoate + H(+). It catalyses the reaction 1,2-dihexadecanoyl-sn-glycero-3-phospho-(1'-sn-glycerol) + H2O = 1-hexadecanoyl-sn-glycero-3-phospho-(1'-sn-glycerol) + hexadecanoate + H(+). The enzyme catalyses 1-hexadecanoyl-2-(9Z-octadecenoyl)-sn-glycero-3-phospho-L-serine + H2O = 1-hexadecanoyl-sn-glycero-3-phospho-L-serine + (9Z)-octadecenoate + H(+). The catalysed reaction is 1-hexadecanoyl-2-(9Z,12Z-octadecadienoyl)-sn-glycero-3-phosphoethanolamine + H2O = 1-hexadecanoyl-sn-glycero-3-phosphoethanolamine + (9Z,12Z)-octadecadienoate + H(+). It carries out the reaction 1-hexadecanoyl-2-(9Z-octadecenoyl)-sn-glycero-3-phosphate + H2O = 1-hexadecanoyl-sn-glycero-3-phosphate + (9Z)-octadecenoate + H(+). It catalyses the reaction 1-O-hexadecyl-2-acetyl-sn-glycero-3-phosphocholine + H2O = 1-O-hexadecyl-sn-glycero-3-phosphocholine + acetate + H(+). Secretory calcium-dependent phospholipase A2 that primarily targets extracellular phospholipids. Hydrolyzes the ester bond of the fatty acyl group attached at sn-2 position of phospholipids with preference for phosphatidylcholines and phosphatidylglycerols over phosphatidylethanolamines. Preferentially releases sn-2 omega-6 and omega-3 polyunsaturated fatty acyl (PUFA) chains over saturated fatty acyls. Contributes to phospholipid remodeling of very low-density lipoprotein (VLDL), low-density lipoprotein (LDL) and high-density lipoprotein (HDL) particles. Hydrolyzes LDL phospholipids releasing unsaturated fatty acids that regulate macrophage differentiation toward foam cells. Efficiently hydrolyzes and inactivates platelet activating factor (PAF), a potent lipid mediator present in oxidized LDL. May act in an autocrine and paracrine manner. Secreted by lung epithelium, targets membrane phospholipids of infiltrating eosinophils, releasing arachidonate and boosting eicosanoid and cysteinyl leukotriene synthesis involved in airway inflammatory response. Secreted by gut epithelium, hydrolyzes dietary and biliary phosphatidylcholines in the gastrointestinal lumen. Plays a stem cell regulator role in colon epithelium. Within intracellular compartment, mediates Paneth-like cell differentiation and its stem cell supporting functions by inhibiting the Wnt signaling pathway in intestinal stem cell (ISC). Secreted in the intestinal lumen upon inflammation, acts in an autocrine way and promotes prostaglandin E2 synthesis that stimulates Wnt signaling pathway in ISCs and tissue regeneration. May participate in hair follicle morphogenesis by regulating phosphatidylethanolamines metabolism at the outermost epithelial layer and facilitating melanin synthesis. By releasing lysophosphatidylcholines (LPCs) at sperm acrosome, controls sperm cell capacitation, acrosome reaction and overall fertility. May promote neurite outgrowth in neuron fibers involved in nociception. Contributes to lipid remodeling of cellular membranes and generation of lipid mediators involved in pathogen clearance. Cleaves sn-2 fatty acyl chains of phosphatidylglycerols and phosphatidylethanolamines, which are major components of membrane phospholipids in bacteria. Displays bactericidal activity against Gram-positive bacteria by directly hydrolyzing phospholipids of the bacterial membrane. In pulmonary epithelium, may contribute to host defense response against adenoviral infection. Prevents adenovirus entry into host cells by hydrolyzing host cell plasma membrane, releasing C16:0 LPCs that inhibit virus-mediated membrane fusion and viral infection. Likely prevents adenoviral entry into the endosomes of host cells. May play a role in maturation and activation of innate immune cells including macrophages, group 2 innate lymphoid cells and mast cells. This Rattus norvegicus (Rat) protein is Group 10 secretory phospholipase A2 (Pla2g10).